Reading from the N-terminus, the 89-residue chain is Probable oxaloacetate decarboxylase gamma chain (89 aa).

Residues 13–33 traverse the membrane as a helical segment; sequence LMLSGMGFVITFLLILIWAIT.

This sequence belongs to the OadG family. As to quaternary structure, heterotrimer of an alpha, a beta and a gamma subunit. Na(+) serves as cofactor.

It is found in the cell membrane. The enzyme catalyses oxaloacetate + 2 Na(+)(in) + H(+) = pyruvate + 2 Na(+)(out) + CO2. In terms of biological role, catalyzes the decarboxylation of oxaloacetate coupled to Na(+) translocation. This Actinobacillus succinogenes (strain ATCC 55618 / DSM 22257 / CCUG 43843 / 130Z) protein is Probable oxaloacetate decarboxylase gamma chain.